Here is a 211-residue protein sequence, read N- to C-terminus: Uridine kinase (211 aa).

Position 12-19 (12-19) interacts with ATP; that stretch reads GGSGSGKT.

Belongs to the uridine kinase family.

It is found in the cytoplasm. It carries out the reaction uridine + ATP = UMP + ADP + H(+). The catalysed reaction is cytidine + ATP = CMP + ADP + H(+). It participates in pyrimidine metabolism; CTP biosynthesis via salvage pathway; CTP from cytidine: step 1/3. It functions in the pathway pyrimidine metabolism; UMP biosynthesis via salvage pathway; UMP from uridine: step 1/1. The protein is Uridine kinase of Bacillus licheniformis (strain ATCC 14580 / DSM 13 / JCM 2505 / CCUG 7422 / NBRC 12200 / NCIMB 9375 / NCTC 10341 / NRRL NRS-1264 / Gibson 46).